The primary structure comprises 119 residues: Large ribosomal subunit protein uL22 (119 aa).

The protein belongs to the universal ribosomal protein uL22 family. Part of the 50S ribosomal subunit.

Its function is as follows. This protein binds specifically to 23S rRNA; its binding is stimulated by other ribosomal proteins, e.g. L4, L17, and L20. It is important during the early stages of 50S assembly. It makes multiple contacts with different domains of the 23S rRNA in the assembled 50S subunit and ribosome. In terms of biological role, the globular domain of the protein is located near the polypeptide exit tunnel on the outside of the subunit, while an extended beta-hairpin is found that lines the wall of the exit tunnel in the center of the 70S ribosome. This chain is Large ribosomal subunit protein uL22, found in Chlorobium phaeovibrioides (strain DSM 265 / 1930) (Prosthecochloris vibrioformis (strain DSM 265)).